The sequence spans 365 residues: tRNA/tmRNA (uracil-C(5))-methyltransferase (365 aa).

The S-adenosyl-L-methionine site is built by glutamine 189, tyrosine 217, asparagine 222, glutamate 238, and aspartate 298. The Nucleophile role is filled by cysteine 323. Glutamate 357 functions as the Proton acceptor in the catalytic mechanism.

Belongs to the class I-like SAM-binding methyltransferase superfamily. RNA M5U methyltransferase family. TrmA subfamily.

It catalyses the reaction uridine(54) in tRNA + S-adenosyl-L-methionine = 5-methyluridine(54) in tRNA + S-adenosyl-L-homocysteine + H(+). It carries out the reaction uridine(341) in tmRNA + S-adenosyl-L-methionine = 5-methyluridine(341) in tmRNA + S-adenosyl-L-homocysteine + H(+). Functionally, dual-specificity methyltransferase that catalyzes the formation of 5-methyluridine at position 54 (m5U54) in all tRNAs, and that of position 341 (m5U341) in tmRNA (transfer-mRNA). The chain is tRNA/tmRNA (uracil-C(5))-methyltransferase from Shewanella woodyi (strain ATCC 51908 / MS32).